The primary structure comprises 1260 residues: Paraclostridial mosquitocidal protein 1 (1260 aa).

His-208 is a Zn(2+) binding site. Catalysis depends on Glu-209, which acts as the Proton acceptor. Positions 212 and 248 each coordinate Zn(2+). The cysteines at positions 395 and 406 are disulfide-linked. Residues 401 to 824 form a translocation domain (TD) region; that stretch reads NRVNICIDVN…NIQSIPDFDI (424 aa). The HCN stretch occupies residues 825–1065; that stretch reads NALIDRLGIQ…SYFNSNILRD (241 aa). Positions 1066 to 1260 are HCC; that stretch reads FWGEPLEYNK…FVSEDEGWKE (195 aa).

This sequence belongs to the peptidase M27 family. It depends on Zn(2+) as a cofactor.

It catalyses the reaction Limited hydrolysis of proteins of the neuroexocytosis apparatus, synaptobrevins, SNAP25 or syntaxin. No detected action on small molecule substrates.. Its activity is regulated as follows. Preincubation with the metalloprotease inhibitor 1,10-phenanthroline before injection into Anopheles or Aedes decreases toxicity. Neurotoxin active against Anopheles but not Aedes mosquitoes upon oral ingestion; expression of the ptox operon (ntnh-orfX1-orfX2-orfX3-pmp1) in B.thuringiensis kills Anopheles but not Aedes mosquito 3rd instar larvae. The ntnh-pmp1 construct is about half as toxic. PMP1 is toxic when injected directly into Anopheles or Aedes mosquito 3rd instar larvae, larvae no longer move, suggesting they are paralyzed. Adult mosquitoes (Anopheles or Aedes) and Drosophila lose the ability to fly in a dose-dependent manner by 24 hours after injection with 100 pg neurotoxin. Not toxic upon injection in mice. In terms of biological role, neurotoxin that cleaves A.gambiae syntaxin 1a, probably hydrolyzing the '240-Glu-|-His-241' bond. Does not cleave A.gambiae n-synaptobrevin or SNAP-25, nor human syntaxin 1A. Its function is as follows. Responsible for host epithelial cell transcytosis, host nerve cell targeting and translocation of PMP1 light chain (LC) into host cytosol. Composed of 3 subdomains; the translocation domain (TD), and N-terminus and C-terminus of the receptor-binding domain (RBD), called HCN and HCC. This Paraclostridium bifermentans (Clostridium bifermentans) protein is Paraclostridial mosquitocidal protein 1.